The sequence spans 205 residues: Phosphoribosyl-dephospho-CoA transferase (205 aa).

Active-site residues include aspartate 134 and aspartate 136.

It belongs to the MdcG family.

The catalysed reaction is apo-[malonate decarboxylase ACP] + 2'-(5''-triphospho-alpha-D-ribosyl)-3'-dephospho-CoA = holo-[malonate decarboxylase ACP] + diphosphate. Transfers 2'-(5-triphosphoribosyl)-3'-dephosphocoenzyme-A to the apo-[acyl-carrier-protein] of the malonate decarboxylase to yield holo-[acyl-carrier-protein]. This chain is Phosphoribosyl-dephospho-CoA transferase, found in Klebsiella pneumoniae subsp. pneumoniae (strain ATCC 700721 / MGH 78578).